The primary structure comprises 172 residues: Adenine phosphoribosyltransferase (172 aa).

Belongs to the purine/pyrimidine phosphoribosyltransferase family. As to quaternary structure, homodimer.

It localises to the cytoplasm. It catalyses the reaction AMP + diphosphate = 5-phospho-alpha-D-ribose 1-diphosphate + adenine. The protein operates within purine metabolism; AMP biosynthesis via salvage pathway; AMP from adenine: step 1/1. Its function is as follows. Catalyzes a salvage reaction resulting in the formation of AMP, that is energically less costly than de novo synthesis. The chain is Adenine phosphoribosyltransferase from Staphylococcus epidermidis (strain ATCC 35984 / DSM 28319 / BCRC 17069 / CCUG 31568 / BM 3577 / RP62A).